The chain runs to 676 residues: Methionine--tRNA ligase (676 aa).

The 'HIGH' region motif lies at 15–25 (PYANGSIHLGH). Cys-146, Cys-149, Cys-159, and Cys-162 together coordinate Zn(2+). A 'KMSKS' region motif is present at residues 332-336 (KMSKS). Lys-335 lines the ATP pocket. In terms of domain architecture, tRNA-binding spans 574–676 (DFAKVDMRIA…SGAQPGMQVK (103 aa)).

This sequence belongs to the class-I aminoacyl-tRNA synthetase family. MetG type 1 subfamily. Homodimer. It depends on Zn(2+) as a cofactor.

The protein resides in the cytoplasm. It carries out the reaction tRNA(Met) + L-methionine + ATP = L-methionyl-tRNA(Met) + AMP + diphosphate. Is required not only for elongation of protein synthesis but also for the initiation of all mRNA translation through initiator tRNA(fMet) aminoacylation. This is Methionine--tRNA ligase from Pectobacterium atrosepticum (strain SCRI 1043 / ATCC BAA-672) (Erwinia carotovora subsp. atroseptica).